Here is a 202-residue protein sequence, read N- to C-terminus: Dephospho-CoA kinase (202 aa).

The DPCK domain maps to 4 to 202 (VIGLTGGIAT…TDKGFINKER (199 aa)). 12 to 17 (ATGKST) provides a ligand contact to ATP.

This sequence belongs to the CoaE family.

The protein localises to the cytoplasm. It catalyses the reaction 3'-dephospho-CoA + ATP = ADP + CoA + H(+). Its pathway is cofactor biosynthesis; coenzyme A biosynthesis; CoA from (R)-pantothenate: step 5/5. Functionally, catalyzes the phosphorylation of the 3'-hydroxyl group of dephosphocoenzyme A to form coenzyme A. The sequence is that of Dephospho-CoA kinase from Staphylococcus haemolyticus (strain JCSC1435).